The chain runs to 255 residues: 5-oxoprolinase subunit A (255 aa).

This sequence belongs to the LamB/PxpA family. Forms a complex composed of PxpA, PxpB and PxpC.

The enzyme catalyses 5-oxo-L-proline + ATP + 2 H2O = L-glutamate + ADP + phosphate + H(+). Its function is as follows. Catalyzes the cleavage of 5-oxoproline to form L-glutamate coupled to the hydrolysis of ATP to ADP and inorganic phosphate. The protein is 5-oxoprolinase subunit A of Pyrococcus horikoshii (strain ATCC 700860 / DSM 12428 / JCM 9974 / NBRC 100139 / OT-3).